Consider the following 122-residue polypeptide: Large ribosomal subunit protein bL19 (122 aa).

Belongs to the bacterial ribosomal protein bL19 family.

Functionally, this protein is located at the 30S-50S ribosomal subunit interface and may play a role in the structure and function of the aminoacyl-tRNA binding site. The protein is Large ribosomal subunit protein bL19 of Prosthecochloris aestuarii (strain DSM 271 / SK 413).